The sequence spans 278 residues: Protein lyl-1 (278 aa).

The segment at 1-46 (MCPPQARAEVGSAMTEKTEMVCASSPAPAPPSKPASPGPLSTEEVD) is disordered. A compositionally biased stretch (pro residues) spans 27 to 37 (APAPPSKPASP). Residues 149 to 201 (ARRVFTNSRERWRQQHVNGAFAELRKLLPTHPPDRKLSKNEVLRLAMKYIGFL) form the bHLH domain. The segment at 212–278 (LTSGPSAPGS…EQTSLSPEVR (67 aa)) is disordered. The segment covering 269 to 278 (EQTSLSPEVR) has biased composition (polar residues). The residue at position 274 (serine 274) is a Phosphoserine.

In terms of assembly, efficient DNA binding requires dimerization with another bHLH protein.

The protein resides in the nucleus. The sequence is that of Protein lyl-1 (Lyl1) from Mus musculus (Mouse).